A 293-amino-acid chain; its full sequence is Transcription elongation factor S-II (293 aa).

Residues 4–81 (ADIRSAKAAL…KKWKADVSKG (78 aa)) enclose the TFIIS N-terminal domain. Positions 81–123 (GRPLKTTTTTSSTPSKHADVGSQAQKQVQKQSSSGQRTFKSDN) are disordered. Low complexity predominate over residues 100–116 (VGSQAQKQVQKQSSSGQ). Residues 133 to 248 (IRNNCIGLMY…HAQGAKPQKA (116 aa)) enclose the TFIIS central domain. Residues 251–291 (DLFTCGKCKQKKVSYYQMQTRSADEPMTTFCECTVCGNRWK) form a TFIIS-type zinc finger. Residues Cys-255, Cys-258, Cys-283, and Cys-286 each contribute to the Zn(2+) site.

Belongs to the TFS-II family.

Its subcellular location is the nucleus. Functionally, necessary for efficient RNA polymerase II transcription elongation past template-encoded arresting sites. The arresting sites in DNA have the property of trapping a certain fraction of elongating RNA polymerases that pass through, resulting in locked ternary complexes. Cleavage of the nascent transcript by S-II allows the resumption of elongation from the new 3'-terminus. The protein is Transcription elongation factor S-II (tfs1) of Schizosaccharomyces pombe (strain 972 / ATCC 24843) (Fission yeast).